The primary structure comprises 255 residues: Thiazole synthase (255 aa).

The Schiff-base intermediate with DXP role is filled by Lys97. 1-deoxy-D-xylulose 5-phosphate is bound by residues Gly158, 184 to 185, and 206 to 207; these read AG and NT.

This sequence belongs to the ThiG family. Homotetramer. Forms heterodimers with either ThiH or ThiS.

The protein localises to the cytoplasm. The catalysed reaction is [ThiS sulfur-carrier protein]-C-terminal-Gly-aminoethanethioate + 2-iminoacetate + 1-deoxy-D-xylulose 5-phosphate = [ThiS sulfur-carrier protein]-C-terminal Gly-Gly + 2-[(2R,5Z)-2-carboxy-4-methylthiazol-5(2H)-ylidene]ethyl phosphate + 2 H2O + H(+). It participates in cofactor biosynthesis; thiamine diphosphate biosynthesis. In terms of biological role, catalyzes the rearrangement of 1-deoxy-D-xylulose 5-phosphate (DXP) to produce the thiazole phosphate moiety of thiamine. Sulfur is provided by the thiocarboxylate moiety of the carrier protein ThiS. In vitro, sulfur can be provided by H(2)S. The protein is Thiazole synthase of Acetivibrio thermocellus (strain ATCC 27405 / DSM 1237 / JCM 9322 / NBRC 103400 / NCIMB 10682 / NRRL B-4536 / VPI 7372) (Clostridium thermocellum).